The chain runs to 230 residues: Cytidylate kinase (230 aa).

ATP is bound at residue 14–22; sequence GPSGVGKSS.

The protein belongs to the cytidylate kinase family. Type 1 subfamily.

The protein resides in the cytoplasm. The catalysed reaction is CMP + ATP = CDP + ADP. It carries out the reaction dCMP + ATP = dCDP + ADP. In Buchnera aphidicola subsp. Baizongia pistaciae (strain Bp), this protein is Cytidylate kinase.